A 362-amino-acid polypeptide reads, in one-letter code: Adenosine deaminase (362 aa).

Residues histidine 19 and histidine 21 each coordinate Zn(2+). Substrate contacts are provided by histidine 21, aspartate 23, and glycine 181. Histidine 208 serves as a coordination point for Zn(2+). Catalysis depends on glutamate 211, which acts as the Proton donor. Residue aspartate 300 coordinates Zn(2+).

The protein belongs to the metallo-dependent hydrolases superfamily. Adenosine and AMP deaminases family. Adenosine deaminase subfamily. Requires Zn(2+) as cofactor.

It catalyses the reaction adenosine + H2O + H(+) = inosine + NH4(+). The enzyme catalyses 2'-deoxyadenosine + H2O + H(+) = 2'-deoxyinosine + NH4(+). Catalyzes the hydrolytic deamination of adenosine and 2-deoxyadenosine. The polypeptide is Adenosine deaminase (Mycolicibacterium vanbaalenii (strain DSM 7251 / JCM 13017 / BCRC 16820 / KCTC 9966 / NRRL B-24157 / PYR-1) (Mycobacterium vanbaalenii)).